The following is a 481-amino-acid chain: Proline--tRNA ligase (481 aa).

This sequence belongs to the class-II aminoacyl-tRNA synthetase family. ProS type 3 subfamily. As to quaternary structure, homodimer.

The protein localises to the cytoplasm. It catalyses the reaction tRNA(Pro) + L-proline + ATP = L-prolyl-tRNA(Pro) + AMP + diphosphate. Its function is as follows. Catalyzes the attachment of proline to tRNA(Pro) in a two-step reaction: proline is first activated by ATP to form Pro-AMP and then transferred to the acceptor end of tRNA(Pro). In Prosthecochloris aestuarii (strain DSM 271 / SK 413), this protein is Proline--tRNA ligase.